The following is a 159-amino-acid chain: Ribosomal RNA large subunit methyltransferase H (159 aa).

S-adenosyl-L-methionine contacts are provided by residues L76, G108, and 127 to 132; that span reads FGRMTY.

Belongs to the RNA methyltransferase RlmH family. As to quaternary structure, homodimer.

It is found in the cytoplasm. It carries out the reaction pseudouridine(1915) in 23S rRNA + S-adenosyl-L-methionine = N(3)-methylpseudouridine(1915) in 23S rRNA + S-adenosyl-L-homocysteine + H(+). In terms of biological role, specifically methylates the pseudouridine at position 1915 (m3Psi1915) in 23S rRNA. This is Ribosomal RNA large subunit methyltransferase H from Carboxydothermus hydrogenoformans (strain ATCC BAA-161 / DSM 6008 / Z-2901).